The following is a 509-amino-acid chain: 2,3-bisphosphoglycerate-independent phosphoglycerate mutase (509 aa).

Positions 14 and 64 each coordinate Mn(2+). S64 serves as the catalytic Phosphoserine intermediate. Residues H125, 155-156 (RD), R187, R193, 259-262 (RADR), and K332 contribute to the substrate site. Positions 399, 403, 440, 441, and 459 each coordinate Mn(2+).

This sequence belongs to the BPG-independent phosphoglycerate mutase family. Monomer. Mn(2+) is required as a cofactor.

It catalyses the reaction (2R)-2-phosphoglycerate = (2R)-3-phosphoglycerate. Its pathway is carbohydrate degradation; glycolysis; pyruvate from D-glyceraldehyde 3-phosphate: step 3/5. Functionally, catalyzes the interconversion of 2-phosphoglycerate and 3-phosphoglycerate. In Psychromonas ingrahamii (strain DSM 17664 / CCUG 51855 / 37), this protein is 2,3-bisphosphoglycerate-independent phosphoglycerate mutase.